Consider the following 88-residue polypeptide: Otospiralin (88 aa).

The signal sequence occupies residues 1-21 (MQACMVPGLALCLLLGSLTEA).

It belongs to the otospiralin family. Ear specific.

It is found in the secreted. Its function is as follows. May be essential for the survival of the neurosensory epithelium of the inner ear. The polypeptide is Otospiralin (OTOS) (Cavia porcellus (Guinea pig)).